The chain runs to 383 residues: 1-deoxy-D-xylulose 5-phosphate reductoisomerase (383 aa).

5 residues coordinate NADPH: T10, G11, S12, I13, and N123. K124 is a 1-deoxy-D-xylulose 5-phosphate binding site. E125 serves as a coordination point for NADPH. A Mn(2+)-binding site is contributed by D149. Residues S150, E151, S175, and H198 each contribute to the 1-deoxy-D-xylulose 5-phosphate site. E151 contacts Mn(2+). G204 provides a ligand contact to NADPH. Positions 211, 216, 217, and 220 each coordinate 1-deoxy-D-xylulose 5-phosphate. E220 contacts Mn(2+).

The protein belongs to the DXR family. Mg(2+) serves as cofactor. It depends on Mn(2+) as a cofactor.

The enzyme catalyses 2-C-methyl-D-erythritol 4-phosphate + NADP(+) = 1-deoxy-D-xylulose 5-phosphate + NADPH + H(+). The protein operates within isoprenoid biosynthesis; isopentenyl diphosphate biosynthesis via DXP pathway; isopentenyl diphosphate from 1-deoxy-D-xylulose 5-phosphate: step 1/6. Catalyzes the NADPH-dependent rearrangement and reduction of 1-deoxy-D-xylulose-5-phosphate (DXP) to 2-C-methyl-D-erythritol 4-phosphate (MEP). This Desulfosudis oleivorans (strain DSM 6200 / JCM 39069 / Hxd3) (Desulfococcus oleovorans) protein is 1-deoxy-D-xylulose 5-phosphate reductoisomerase.